We begin with the raw amino-acid sequence, 255 residues long: Geranylgeranylglyceryl phosphate synthase (255 aa).

Mg(2+) is bound by residues aspartate 34 and threonine 64. Sn-glycerol 1-phosphate contacts are provided by residues 182–188 (YLEAGSG), 213–214 (GG), and 235–236 (GN).

The protein belongs to the GGGP/HepGP synthase family. Group II subfamily. Mg(2+) is required as a cofactor.

It is found in the cytoplasm. The catalysed reaction is sn-glycerol 1-phosphate + (2E,6E,10E)-geranylgeranyl diphosphate = sn-3-O-(geranylgeranyl)glycerol 1-phosphate + diphosphate. It participates in membrane lipid metabolism; glycerophospholipid metabolism. Functionally, prenyltransferase that catalyzes the transfer of the geranylgeranyl moiety of geranylgeranyl diphosphate (GGPP) to the C3 hydroxyl of sn-glycerol-1-phosphate (G1P). This reaction is the first ether-bond-formation step in the biosynthesis of archaeal membrane lipids. The protein is Geranylgeranylglyceryl phosphate synthase of Saccharolobus islandicus (strain M.16.27) (Sulfolobus islandicus).